A 142-amino-acid chain; its full sequence is Transcription antitermination protein NusB (142 aa).

Belongs to the NusB family.

Its function is as follows. Involved in transcription antitermination. Required for transcription of ribosomal RNA (rRNA) genes. Binds specifically to the boxA antiterminator sequence of the ribosomal RNA (rrn) operons. The polypeptide is Transcription antitermination protein NusB (Streptococcus mutans serotype c (strain ATCC 700610 / UA159)).